A 759-amino-acid polypeptide reads, in one-letter code: Phosphoribosylformylglycinamidine synthase subunit PurL (759 aa).

His46 is an active-site residue. ATP contacts are provided by Tyr49 and Lys88. Position 90 (Glu90) interacts with Mg(2+). Substrate is bound by residues 91–94 and Arg113; that span reads SHNH. The active-site Proton acceptor is His92. A Mg(2+)-binding site is contributed by Asp114. Gln237 serves as a coordination point for substrate. Residue Asp265 participates in Mg(2+) binding. 309–311 lines the substrate pocket; it reads ESQ. The ATP site is built by Asp498 and Gly535. Asn536 serves as a coordination point for Mg(2+). Ser538 serves as a coordination point for substrate.

The protein belongs to the FGAMS family. In terms of assembly, monomer. Part of the FGAM synthase complex composed of 1 PurL, 1 PurQ and 2 PurS subunits.

The protein localises to the cytoplasm. The catalysed reaction is N(2)-formyl-N(1)-(5-phospho-beta-D-ribosyl)glycinamide + L-glutamine + ATP + H2O = 2-formamido-N(1)-(5-O-phospho-beta-D-ribosyl)acetamidine + L-glutamate + ADP + phosphate + H(+). The protein operates within purine metabolism; IMP biosynthesis via de novo pathway; 5-amino-1-(5-phospho-D-ribosyl)imidazole from N(2)-formyl-N(1)-(5-phospho-D-ribosyl)glycinamide: step 1/2. Functionally, part of the phosphoribosylformylglycinamidine synthase complex involved in the purines biosynthetic pathway. Catalyzes the ATP-dependent conversion of formylglycinamide ribonucleotide (FGAR) and glutamine to yield formylglycinamidine ribonucleotide (FGAM) and glutamate. The FGAM synthase complex is composed of three subunits. PurQ produces an ammonia molecule by converting glutamine to glutamate. PurL transfers the ammonia molecule to FGAR to form FGAM in an ATP-dependent manner. PurS interacts with PurQ and PurL and is thought to assist in the transfer of the ammonia molecule from PurQ to PurL. The polypeptide is Phosphoribosylformylglycinamidine synthase subunit PurL (Anaeromyxobacter dehalogenans (strain 2CP-1 / ATCC BAA-258)).